The sequence spans 417 residues: Serine hydroxymethyltransferase (417 aa).

Residues leucine 112 and 116–118 (GHL) contribute to the (6S)-5,6,7,8-tetrahydrofolate site. The residue at position 221 (lysine 221) is an N6-(pyridoxal phosphate)lysine. Residue glutamate 247 participates in (6S)-5,6,7,8-tetrahydrofolate binding.

It belongs to the SHMT family. In terms of assembly, homodimer. Pyridoxal 5'-phosphate serves as cofactor.

Its subcellular location is the cytoplasm. It carries out the reaction (6R)-5,10-methylene-5,6,7,8-tetrahydrofolate + glycine + H2O = (6S)-5,6,7,8-tetrahydrofolate + L-serine. It participates in one-carbon metabolism; tetrahydrofolate interconversion. The protein operates within amino-acid biosynthesis; glycine biosynthesis; glycine from L-serine: step 1/1. In terms of biological role, catalyzes the reversible interconversion of serine and glycine with tetrahydrofolate (THF) serving as the one-carbon carrier. This reaction serves as the major source of one-carbon groups required for the biosynthesis of purines, thymidylate, methionine, and other important biomolecules. Also exhibits THF-independent aldolase activity toward beta-hydroxyamino acids, producing glycine and aldehydes, via a retro-aldol mechanism. In Borrelia hermsii (strain HS1 / DAH), this protein is Serine hydroxymethyltransferase.